Reading from the N-terminus, the 868-residue chain is Rifampicin phosphotransferase (868 aa).

Residues 5–317 (TERYVLDLQE…FHIVQSRPIT (313 aa)) are ATP-binding. Positions 26, 120, 135, 139, 186, 300, 312, and 314 each coordinate ATP. The rifampicin-binding stretch occupies residues 330-755 (NHVYVSVGHQ…TSDGEALTGA (426 aa)). The segment at 410-430 (FVPSLPDAPPAGPRAGAAPEP) is disordered. Residues 768 to 866 (GLPVSTGTVE…VHGTDGYIEI (99 aa)) form a swivel phosphohistidine region. H826 functions as the Tele-phosphohistidine intermediate in the catalytic mechanism.

Belongs to the rifampicin phosphotransferase family.

The catalysed reaction is rifampicin + ATP + H2O = 21-phosphorifampicin + AMP + phosphate + 2 H(+). Catalyzes the phosphorylation of rifampicin, also known as rifampin (RIF), leading to its inactivation. Confers high level resistance to a variety of clinically used rifamycin antibiotics. Does not show phosphoenolpyruvate (PEP) synthase activity. The sequence is that of Rifampicin phosphotransferase from Streptomyces sviceus (strain ATCC 29083 / DSM 924 / JCM 4929 / NBRC 13980 / NCIMB 11184 / NRRL 5439 / UC 5370).